Consider the following 320-residue polypeptide: o-succinylbenzoate synthase (320 aa).

Catalysis depends on K133, which acts as the Proton donor. Mg(2+)-binding residues include D161, E190, and D213. K235 functions as the Proton acceptor in the catalytic mechanism.

Belongs to the mandelate racemase/muconate lactonizing enzyme family. MenC type 1 subfamily. A divalent metal cation is required as a cofactor.

The catalysed reaction is (1R,6R)-6-hydroxy-2-succinyl-cyclohexa-2,4-diene-1-carboxylate = 2-succinylbenzoate + H2O. It functions in the pathway quinol/quinone metabolism; 1,4-dihydroxy-2-naphthoate biosynthesis; 1,4-dihydroxy-2-naphthoate from chorismate: step 4/7. The protein operates within quinol/quinone metabolism; menaquinone biosynthesis. Its function is as follows. Converts 2-succinyl-6-hydroxy-2,4-cyclohexadiene-1-carboxylate (SHCHC) to 2-succinylbenzoate (OSB). The polypeptide is o-succinylbenzoate synthase (Salmonella typhi).